Here is a 191-residue protein sequence, read N- to C-terminus: Molybdenum cofactor guanylyltransferase (191 aa).

GTP-binding positions include 13–15 (LAG), Lys-26, Asp-72, and Asp-102. Asp-102 contacts Mg(2+).

This sequence belongs to the MobA family. In terms of assembly, monomer. Mg(2+) is required as a cofactor.

Its subcellular location is the cytoplasm. It carries out the reaction Mo-molybdopterin + GTP + H(+) = Mo-molybdopterin guanine dinucleotide + diphosphate. Transfers a GMP moiety from GTP to Mo-molybdopterin (Mo-MPT) cofactor (Moco or molybdenum cofactor) to form Mo-molybdopterin guanine dinucleotide (Mo-MGD) cofactor. The chain is Molybdenum cofactor guanylyltransferase from Pseudomonas putida (Arthrobacter siderocapsulatus).